The chain runs to 268 residues: 4-hydroxy-tetrahydrodipicolinate reductase (268 aa).

NAD(+) is bound by residues 10–15, aspartate 36, 99–101, and 123–126; these read GAGGRM, GTT, and APNM. The active-site Proton donor/acceptor is histidine 156. Histidine 157 is a (S)-2,3,4,5-tetrahydrodipicolinate binding site. Residue lysine 160 is the Proton donor of the active site. 166–167 lines the (S)-2,3,4,5-tetrahydrodipicolinate pocket; that stretch reads GT.

The protein belongs to the DapB family.

The protein resides in the cytoplasm. It carries out the reaction (S)-2,3,4,5-tetrahydrodipicolinate + NAD(+) + H2O = (2S,4S)-4-hydroxy-2,3,4,5-tetrahydrodipicolinate + NADH + H(+). The enzyme catalyses (S)-2,3,4,5-tetrahydrodipicolinate + NADP(+) + H2O = (2S,4S)-4-hydroxy-2,3,4,5-tetrahydrodipicolinate + NADPH + H(+). The protein operates within amino-acid biosynthesis; L-lysine biosynthesis via DAP pathway; (S)-tetrahydrodipicolinate from L-aspartate: step 4/4. In terms of biological role, catalyzes the conversion of 4-hydroxy-tetrahydrodipicolinate (HTPA) to tetrahydrodipicolinate. In Dechloromonas aromatica (strain RCB), this protein is 4-hydroxy-tetrahydrodipicolinate reductase.